Consider the following 513-residue polypeptide: ATP synthase subunit alpha (513 aa).

An ATP-binding site is contributed by 169-176; sequence GDRQTGKT.

The protein belongs to the ATPase alpha/beta chains family. In terms of assembly, F-type ATPases have 2 components, CF(1) - the catalytic core - and CF(0) - the membrane proton channel. CF(1) has five subunits: alpha(3), beta(3), gamma(1), delta(1), epsilon(1). CF(0) has three main subunits: a(1), b(2) and c(9-12). The alpha and beta chains form an alternating ring which encloses part of the gamma chain. CF(1) is attached to CF(0) by a central stalk formed by the gamma and epsilon chains, while a peripheral stalk is formed by the delta and b chains.

It is found in the cell inner membrane. It catalyses the reaction ATP + H2O + 4 H(+)(in) = ADP + phosphate + 5 H(+)(out). In terms of biological role, produces ATP from ADP in the presence of a proton gradient across the membrane. The alpha chain is a regulatory subunit. This chain is ATP synthase subunit alpha, found in Shewanella putrefaciens (strain CN-32 / ATCC BAA-453).